Consider the following 359-residue polypeptide: Fructose-bisphosphate aldolase class 2 (359 aa).

Lysine 9 carries the N6-acetyllysine modification. A D-glyceraldehyde 3-phosphate-binding site is contributed by serine 62. Residue aspartate 110 is the Proton donor of the active site. The Zn(2+) site is built by histidine 111, aspartate 145, glutamate 175, and histidine 227. Position 228 (glycine 228) interacts with dihydroxyacetone phosphate. Histidine 265 contacts Zn(2+). Residues 266–268 (GGS) and 287–290 (NIDT) contribute to the dihydroxyacetone phosphate site.

Belongs to the class II fructose-bisphosphate aldolase family. In terms of assembly, homodimer. Zn(2+) serves as cofactor.

The catalysed reaction is beta-D-fructose 1,6-bisphosphate = D-glyceraldehyde 3-phosphate + dihydroxyacetone phosphate. It functions in the pathway carbohydrate degradation; glycolysis; D-glyceraldehyde 3-phosphate and glycerone phosphate from D-glucose: step 4/4. In terms of biological role, catalyzes the aldol condensation of dihydroxyacetone phosphate (DHAP or glycerone-phosphate) with glyceraldehyde 3-phosphate (G3P) to form fructose 1,6-bisphosphate (FBP) in gluconeogenesis and the reverse reaction in glycolysis. The polypeptide is Fructose-bisphosphate aldolase class 2 (fbaA) (Escherichia coli O157:H7).